Reading from the N-terminus, the 290-residue chain is Shikimate dehydrogenase (NADP(+)) (290 aa).

Shikimate contacts are provided by residues 24 to 26 (SLS) and threonine 71. The active-site Proton acceptor is lysine 75. Asparagine 96 and aspartate 111 together coordinate shikimate. NADP(+) is bound by residues 136-140 (GAGGA), 160-165 (NRTVDR), and leucine 233. Residue tyrosine 235 coordinates shikimate. Glycine 256 serves as a coordination point for NADP(+).

It belongs to the shikimate dehydrogenase family. In terms of assembly, homodimer.

It carries out the reaction shikimate + NADP(+) = 3-dehydroshikimate + NADPH + H(+). It functions in the pathway metabolic intermediate biosynthesis; chorismate biosynthesis; chorismate from D-erythrose 4-phosphate and phosphoenolpyruvate: step 4/7. Involved in the biosynthesis of the chorismate, which leads to the biosynthesis of aromatic amino acids. Catalyzes the reversible NADPH linked reduction of 3-dehydroshikimate (DHSA) to yield shikimate (SA). The sequence is that of Shikimate dehydrogenase (NADP(+)) from Methanopyrus kandleri (strain AV19 / DSM 6324 / JCM 9639 / NBRC 100938).